Consider the following 739-residue polypeptide: Polyribonucleotide nucleotidyltransferase (739 aa).

Positions 514 and 520 each coordinate Mg(2+). The region spanning 580–639 (PRIITVKIPVDKIGEVIGPKGKMINQIQEDTGADITIEDDGTIYIGAAQGSQAEAARATI) is the KH domain. The S1 motif domain occupies 651–723 (GERYLGTVVK…SRGKLSLIPV (73 aa)).

This sequence belongs to the polyribonucleotide nucleotidyltransferase family. Mg(2+) serves as cofactor.

It is found in the cytoplasm. The catalysed reaction is RNA(n+1) + phosphate = RNA(n) + a ribonucleoside 5'-diphosphate. Involved in mRNA degradation. Catalyzes the phosphorolysis of single-stranded polyribonucleotides processively in the 3'- to 5'-direction. This Streptomyces coelicolor (strain ATCC BAA-471 / A3(2) / M145) protein is Polyribonucleotide nucleotidyltransferase.